A 141-amino-acid polypeptide reads, in one-letter code: Large ribosomal subunit protein bL17 (141 aa).

The protein belongs to the bacterial ribosomal protein bL17 family. In terms of assembly, part of the 50S ribosomal subunit. Contacts protein L32.

The chain is Large ribosomal subunit protein bL17 from Bartonella bacilliformis (strain ATCC 35685 / KC583 / Herrer 020/F12,63).